The sequence spans 270 residues: Formamidopyrimidine-DNA glycosylase (270 aa).

Pro2 functions as the Schiff-base intermediate with DNA in the catalytic mechanism. Residue Glu3 is the Proton donor of the active site. The active-site Proton donor; for beta-elimination activity is Lys58. DNA contacts are provided by His92, Arg111, and Arg153. The FPG-type zinc finger occupies 238-270; the sequence is SVYGASVCPVCGGALRQIRLAQRGTWFCPRCQR. Catalysis depends on Arg260, which acts as the Proton donor; for delta-elimination activity.

It belongs to the FPG family. In terms of assembly, monomer. It depends on Zn(2+) as a cofactor.

It carries out the reaction Hydrolysis of DNA containing ring-opened 7-methylguanine residues, releasing 2,6-diamino-4-hydroxy-5-(N-methyl)formamidopyrimidine.. The enzyme catalyses 2'-deoxyribonucleotide-(2'-deoxyribose 5'-phosphate)-2'-deoxyribonucleotide-DNA = a 3'-end 2'-deoxyribonucleotide-(2,3-dehydro-2,3-deoxyribose 5'-phosphate)-DNA + a 5'-end 5'-phospho-2'-deoxyribonucleoside-DNA + H(+). Its function is as follows. Involved in base excision repair of DNA damaged by oxidation or by mutagenic agents. Acts as a DNA glycosylase that recognizes and removes damaged bases. Has a preference for oxidized purines, such as 7,8-dihydro-8-oxoguanine (8-oxoG). Has AP (apurinic/apyrimidinic) lyase activity and introduces nicks in the DNA strand. Cleaves the DNA backbone by beta-delta elimination to generate a single-strand break at the site of the removed base with both 3'- and 5'-phosphates. The protein is Formamidopyrimidine-DNA glycosylase of Halorhodospira halophila (strain DSM 244 / SL1) (Ectothiorhodospira halophila (strain DSM 244 / SL1)).